Here is a 1033-residue protein sequence, read N- to C-terminus: Tyrosine-protein kinase-like otk (1033 aa).

The N-terminal stretch at 1-22 (MTARMISIYGLVLASMMASVLA) is a signal peptide. Residues 23-581 (SSSRFQRLPQ…GGDGFLVTRA (559 aa)) lie on the Extracellular side of the membrane. Ig-like C2-type domains are found at residues 25–114 (SRFQ…AKLS), 113–199 (LSVI…RVMS), 251–365 (PEDL…VPVS), 368–463 (PGVL…VAIN), and 468–558 (PKFS…VQLI). A glycan (N-linked (GlcNAc...) asparagine) is linked at N39. 4 cysteine pairs are disulfide-bonded: C46–C95, C137–C188, C276–C354, and C399–C447. 7 N-linked (GlcNAc...) asparagine glycosylation sites follow: N336, N417, N429, N444, N457, N512, and N524. An intrachain disulfide couples C490 to C542. The helical transmembrane segment at 582–602 (VLITMTVALAYIVLVVGLMLW) threads the bilayer. Residues 603–1033 (CRYRRQARKA…LSKAMQSAEK (431 aa)) are Cytoplasmic-facing. Disordered regions lie at residues 617 to 679 (LSTK…KKSA) and 718 to 760 (SPSD…KTSM). Polar residues predominate over residues 655–673 (KSSGDAQKSDDTACSQQSR). S678 bears the Phosphoserine mark. A Protein kinase; inactive domain is found at 692 to 1028 (LSELIQIGRG…QLGAALSKAM (337 aa)). The span at 720 to 731 (SDKDADTEKQHS) shows a compositional bias: basic and acidic residues.

This sequence belongs to the protein kinase superfamily. Tyr protein kinase family. Insulin receptor subfamily. As to quaternary structure, interacts with plexA; component of a receptor complex that mediates the repulsive signaling in response to Semaphorin ligands.

It localises to the cell membrane. Acts as a calcium-dependent, homophilic cell adhesion molecule that regulates neural recognition during the development of the nervous system. Component of the repulsive Plexin signaling response to regulate motor axon guidance at the embryonic stage. Also component of a receptor complex that is required in the adult visual system to innervate the lamina layer; specific targeting of R1-R6 axons. In Drosophila yakuba (Fruit fly), this protein is Tyrosine-protein kinase-like otk.